The primary structure comprises 734 residues: Photosystem I P700 chlorophyll a apoprotein A2 (734 aa).

Transmembrane regions (helical) follow at residues 46–69 (IFASHFGQLAIIFLWTSGNLFHVA), 135–158 (LYTGALFLLFLSTLSLIGGWLHLQ), 175–199 (LNHHLSGLFGVSSLAWTGHLVHVAI), 273–291 (IAHHHLAIAFIFLIAGHMY), 330–353 (IHFQLGLALASLGVITSLVAQHMY), 369–395 (AALYTHHQYIAGFIMTGAFAHGAIFFI), 417–439 (AIISHLSWASLFLGFHTLGLYVH), and 517–535 (FLVHHAIALGLHTTTLILV). The [4Fe-4S] cluster site is built by cysteine 559 and cysteine 568. A run of 2 helical transmembrane segments spans residues 575–596 (AFYLAVFWMLNTIGWVTFYWHW) and 643–665 (LSVWAWMFLFGHLVWATGFMFLI). Residues histidine 654, methionine 662, and tyrosine 670 each coordinate chlorophyll a. Tryptophan 671 contacts phylloquinone. A helical membrane pass occupies residues 707–727 (LVGLAHFSVGYIFTYAAFLIA).

This sequence belongs to the PsaA/PsaB family. In terms of assembly, the PsaA/B heterodimer binds the P700 chlorophyll special pair and subsequent electron acceptors. PSI consists of a core antenna complex that captures photons, and an electron transfer chain that converts photonic excitation into a charge separation. The eukaryotic PSI reaction center is composed of at least 11 subunits. The cofactor is P700 is a chlorophyll a/chlorophyll a' dimer, A0 is one or more chlorophyll a, A1 is one or both phylloquinones and FX is a shared 4Fe-4S iron-sulfur center..

Its subcellular location is the plastid. The protein localises to the chloroplast thylakoid membrane. It catalyses the reaction reduced [plastocyanin] + hnu + oxidized [2Fe-2S]-[ferredoxin] = oxidized [plastocyanin] + reduced [2Fe-2S]-[ferredoxin]. Its function is as follows. PsaA and PsaB bind P700, the primary electron donor of photosystem I (PSI), as well as the electron acceptors A0, A1 and FX. PSI is a plastocyanin-ferredoxin oxidoreductase, converting photonic excitation into a charge separation, which transfers an electron from the donor P700 chlorophyll pair to the spectroscopically characterized acceptors A0, A1, FX, FA and FB in turn. Oxidized P700 is reduced on the lumenal side of the thylakoid membrane by plastocyanin. The protein is Photosystem I P700 chlorophyll a apoprotein A2 of Saccharum hybrid (Sugarcane).